Reading from the N-terminus, the 257-residue chain is Receptor expression-enhancing protein 4 (257 aa).

2 helical membrane-spanning segments follow: residues 1-21 (MVSW…YPAY) and 42-62 (WIVF…ISWF). Residues Ser-152 and Ser-194 each carry the phosphoserine modification. The disordered stretch occupies residues 159–257 (IPDTSAPTYQ…KKTIPSDLDS (99 aa)). At Thr-196 the chain carries Phosphothreonine. At Ser-202 the chain carries Phosphoserine. Residue Thr-250 is modified to Phosphothreonine. Ser-253 carries the phosphoserine modification.

It belongs to the DP1 family.

The protein localises to the endoplasmic reticulum membrane. Functionally, microtubule-binding protein required to ensure proper cell division and nuclear envelope reassembly by sequestering the endoplasmic reticulum away from chromosomes during mitosis. Probably acts by clearing the endoplasmic reticulum membrane from metaphase chromosomes. The protein is Receptor expression-enhancing protein 4 (Reep4) of Rattus norvegicus (Rat).